Reading from the N-terminus, the 223-residue chain is Prolactin-3D4 (223 aa).

The N-terminal stretch at 1–28 (MQLTLTLSGSSMQLLLLVSNLLLWENMA) is a signal peptide. Cystine bridges form between C80–C198 and C215–C223. N108 and N157 each carry an N-linked (GlcNAc...) asparagine glycan.

Belongs to the somatotropin/prolactin family. In terms of processing, N-glycosylated.

Its subcellular location is the secreted. This chain is Prolactin-3D4 (Prl3d4), found in Rattus norvegicus (Rat).